The following is a 452-amino-acid chain: Mannan endo-1,6-alpha-mannosidase DCW1 (452 aa).

Residues 1 to 18 (MKFSIYLIISLFSSFSHA) form the signal peptide. Residues N25, N81, N106, N130, N200, N237, N240, N262, N271, and N286 are each glycosylated (N-linked (GlcNAc...) asparagine). A lipid anchor (GPI-anchor amidated glycine) is attached at G431. The propeptide at 432 to 452 (AGIITAIIGASLVGSCVWLIL) is removed in mature form.

Belongs to the glycosyl hydrolase 76 family.

It localises to the cell membrane. It carries out the reaction Random hydrolysis of (1-&gt;6)-alpha-D-mannosidic linkages in unbranched (1-&gt;6)-mannans.. In terms of biological role, probable mannosidase required for normal synthesis of the cell wall. This chain is Mannan endo-1,6-alpha-mannosidase DCW1 (DCW1), found in Candida albicans (strain SC5314 / ATCC MYA-2876) (Yeast).